Reading from the N-terminus, the 577-residue chain is Protein O-linked-mannose beta-1,4-N-acetylglucosaminyltransferase 2 (577 aa).

Over 1-4 (MNIA) the chain is Cytoplasmic. Residues 5 to 25 (AVFNALLVSVLATVLWKYIKL) traverse the membrane as a helical; Signal-anchor for type II membrane protein segment. Over 26–577 (REHAFMVEEE…PFADVLLCST (552 aa)) the chain is Lumenal. 4 N-linked (GlcNAc...) asparagine glycosylation sites follow: asparagine 98, asparagine 275, asparagine 335, and asparagine 540. Residues 481–577 (KVRDARCQAS…PFADVLLCST (97 aa)) enclose the Fibronectin type-III domain.

It belongs to the glycosyltransferase 61 family.

The protein resides in the endoplasmic reticulum membrane. The enzyme catalyses 3-O-(alpha-D-mannosyl)-L-threonyl-[protein] + UDP-N-acetyl-alpha-D-glucosamine = 3-O-(N-acetyl-beta-D-glucosaminyl-(1-&gt;4)-alpha-D-mannosyl)-L-threonyl-[protein] + UDP + H(+). Its pathway is protein modification; protein glycosylation. O-linked mannose beta-1,4-N-acetylglucosaminyltransferase that transfers UDP-N-acetyl-D-glucosamine to the 4-position of the mannose to generate N-acetyl-D-glucosamine-beta-1,4-O-D-mannosylprotein. Involved in the biosynthesis of the phosphorylated O-mannosyl trisaccharide (N-acetylgalactosamine-beta-3-N-acetylglucosamine-beta-4-(phosphate-6-)mannose), a carbohydrate structure present in alpha-dystroglycan (DAG1), which is required for binding laminin G-like domain-containing extracellular proteins with high affinity. This Gallus gallus (Chicken) protein is Protein O-linked-mannose beta-1,4-N-acetylglucosaminyltransferase 2 (POMGNT2).